The primary structure comprises 187 residues: MVVLGVDPGSLKTGYGVVRQDSSGFSVLTCGVIRLHSGKSHAERIGQIYRELEEIINSTKPRRVALETVFLSKNAQSALKLGQVRGAVIALSMNTDLELHEYAPREVKSAVTGRGSASKEQVAFMVTRMLQVTGHITSYDVTDALGLALCDLLRIGNRAAQEPAQGISRGNKNWTGFVRAFPEMVVR.

Active-site residues include D7, E67, and D140. The Mg(2+) site is built by D7, E67, and D140.

This sequence belongs to the RuvC family. Homodimer which binds Holliday junction (HJ) DNA. The HJ becomes 2-fold symmetrical on binding to RuvC with unstacked arms; it has a different conformation from HJ DNA in complex with RuvA. In the full resolvosome a probable DNA-RuvA(4)-RuvB(12)-RuvC(2) complex forms which resolves the HJ. Mg(2+) serves as cofactor.

The protein resides in the cytoplasm. It carries out the reaction Endonucleolytic cleavage at a junction such as a reciprocal single-stranded crossover between two homologous DNA duplexes (Holliday junction).. The RuvA-RuvB-RuvC complex processes Holliday junction (HJ) DNA during genetic recombination and DNA repair. Endonuclease that resolves HJ intermediates. Cleaves cruciform DNA by making single-stranded nicks across the HJ at symmetrical positions within the homologous arms, yielding a 5'-phosphate and a 3'-hydroxyl group; requires a central core of homology in the junction. The consensus cleavage sequence is 5'-(A/T)TT(C/G)-3'. Cleavage occurs on the 3'-side of the TT dinucleotide at the point of strand exchange. HJ branch migration catalyzed by RuvA-RuvB allows RuvC to scan DNA until it finds its consensus sequence, where it cleaves and resolves the cruciform DNA. The polypeptide is Crossover junction endodeoxyribonuclease RuvC (Chlorobium phaeobacteroides (strain DSM 266 / SMG 266 / 2430)).